A 218-amino-acid chain; its full sequence is Sodium channel regulatory subunit beta-1 (218 aa).

The N-terminal stretch at 1-18 is a signal peptide; that stretch reads MGTLLAFVVGAALVSSAW. The Extracellular portion of the chain corresponds to 19 to 157; the sequence is GGCVEVDSET…DKANRDMASI (139 aa). 2 disulfides stabilise this stretch: Cys-21–Cys-43 and Cys-40–Cys-121. Residues 22–150 enclose the Ig-like C2-type domain; that stretch reads VEVDSETEAV…KIHLEVVDKA (129 aa). N-linked (GlcNAc...) asparagine glycosylation is found at Asn-93, Asn-110, Asn-114, and Asn-135. Residues 158–179 traverse the membrane as a helical segment; the sequence is VSEIMMYVLIVVLTIWLVAEMV. Over 180–218 the chain is Cytoplasmic; sequence YCYKKIAAATEAAAQENASEYLAITSESKENCTGVQVAE.

It belongs to the sodium channel auxiliary subunit SCN1B (TC 8.A.17) family. A voltage-gated sodium (Nav) channel consists of an ion-conducting pore-forming alpha subunit functional on its own that is regulated by one or more beta subunits. Interacts with SCN1A; regulatory subunit of SCN1A/Nav1.1. Interacts with SCN3A; regulatory subunit of SCN3A/Nav1.3. Interacts with SCN4A; regulatory subunit of SCN4A/Nav1.4. Interacts with SCN5A; regulatory subunit of SCN5A/Nav1.5. Interacts with SCN8A; regulatory subunit of SCN8A/Nav1.6. Interacts with SCN9A; regulatory subunit of SCN9A/Nav1.7. Interacts with SCN10A; regulatory subunit of SCN10A/Nav1.8. Interacts with NFASC. Interacts with TMEM65.

The protein resides in the cell membrane. It is found in the perikaryon. The protein localises to the cell projection. It localises to the axon. In terms of biological role, regulatory subunit of multiple voltage-gated sodium (Nav) channels directly mediating the depolarization of excitable membranes. Navs, also called VGSCs (voltage-gated sodium channels) or VDSCs (voltage-dependent sodium channels), operate by switching between closed and open conformations depending on the voltage difference across the membrane. In the open conformation they allow Na(+) ions to selectively pass through the pore, along their electrochemical gradient. The influx of Na+ ions provokes membrane depolarization, initiating the propagation of electrical signals throughout cells and tissues. The accessory beta subunits participate in localization and functional modulation of the Nav channels. Modulates the activity of SCN1A/Nav1.1, SCN2A/Nav1.2, SCN3A/Nav1.3, SCN4A/Nav1.4, SCN5A/Nav1.5, SCN8A/Nav1.6, SCN9A/Nav1.7 and SCN10A/Nav1.8. This chain is Sodium channel regulatory subunit beta-1, found in Bos taurus (Bovine).